A 370-amino-acid polypeptide reads, in one-letter code: MATHKLLLLPGDGIGPEVMGEVKRLIDWLNSAGIAKFETDTGLVGGSAYDAHKVSISEGDMAKALAADAIIFGAVGGPKWDAVPYEVRPEAGLLRLRKDLGLFANLRPAVCYPALADASSLKREAVEGLDIMIVRELTGGVYFGEPKTITDLGNGQKRAIDTQVYDTYEIERIARVAFDLAKKRKNKVTSMEKRNVMKSGVLWNEVVTQVHKREYPDVTLEHQLADSGGMMLVKWPKQFDVIVTDNLFGDMLSDIAAMLTGSLGMLPSASLGEVDVKSKKRKALYEPVHGSAPDIAGKGLANPIAMISSFGMALRYSFDMGALADKVDAAIAAVLASGLRTADIKSEGTTAASTTQMGEAILKELQKLHA.

Residue 77–90 (GPKWDAVPYEVRPE) coordinates NAD(+). Residues R97, R107, R135, and D226 each coordinate substrate. The Mg(2+) site is built by D226, D250, and D254. 290 to 302 (GSAPDIAGKGLAN) contributes to the NAD(+) binding site.

Belongs to the isocitrate and isopropylmalate dehydrogenases family. LeuB type 1 subfamily. As to quaternary structure, homodimer. It depends on Mg(2+) as a cofactor. Mn(2+) is required as a cofactor.

The protein localises to the cytoplasm. The enzyme catalyses (2R,3S)-3-isopropylmalate + NAD(+) = 4-methyl-2-oxopentanoate + CO2 + NADH. It participates in amino-acid biosynthesis; L-leucine biosynthesis; L-leucine from 3-methyl-2-oxobutanoate: step 3/4. Functionally, catalyzes the oxidation of 3-carboxy-2-hydroxy-4-methylpentanoate (3-isopropylmalate) to 3-carboxy-4-methyl-2-oxopentanoate. The product decarboxylates to 4-methyl-2 oxopentanoate. The chain is 3-isopropylmalate dehydrogenase 2 from Bradyrhizobium diazoefficiens (strain JCM 10833 / BCRC 13528 / IAM 13628 / NBRC 14792 / USDA 110).